Here is an 88-residue protein sequence, read N- to C-terminus: Small ribosomal subunit protein bS20 (88 aa).

This sequence belongs to the bacterial ribosomal protein bS20 family.

In terms of biological role, binds directly to 16S ribosomal RNA. This Methylorubrum populi (strain ATCC BAA-705 / NCIMB 13946 / BJ001) (Methylobacterium populi) protein is Small ribosomal subunit protein bS20.